The sequence spans 213 residues: Kynurenine formamidase (213 aa).

Trp18 provides a ligand contact to substrate. Zn(2+)-binding residues include His48, His52, and Asp54. His58 acts as the Proton donor/acceptor in catalysis. Zn(2+)-binding residues include His160 and Glu172.

It belongs to the Cyclase 1 superfamily. KynB family. Homodimer. It depends on Zn(2+) as a cofactor.

The catalysed reaction is N-formyl-L-kynurenine + H2O = L-kynurenine + formate + H(+). The protein operates within amino-acid degradation; L-tryptophan degradation via kynurenine pathway; L-kynurenine from L-tryptophan: step 2/2. Catalyzes the hydrolysis of N-formyl-L-kynurenine to L-kynurenine, the second step in the kynurenine pathway of tryptophan degradation. This Burkholderia multivorans (strain ATCC 17616 / 249) protein is Kynurenine formamidase.